Reading from the N-terminus, the 239-residue chain is MGASIDDYCLIHKKILHSEDLLKYILETSAYPREHEQLKGLREVTEKHEWSSALVPADEGLFLSMLLKLMNAKRTIEIGVYTGYSLLTTALALPEDGKITAIDVNKSFFEIGLPFIQKAGVEHKINFIESEALPVLDQMLQETKEEDLYDYAFVDADKSNYANYHERLVKLVRIGGAILYDNTLWYGSVAYPEYPGLHPEEEVARLSFRNLNTFLAADPRVEISQVSIGDGVTICRRLY.

Residues Val-55, Glu-77, 79-80 (GV), Ser-85, Asp-103, and Ala-132 contribute to the S-adenosyl-L-methionine site. Residue Asp-155 participates in a divalent metal cation binding. Asp-157 is an S-adenosyl-L-methionine binding site. A divalent metal cation contacts are provided by Asp-181 and Asn-182.

It belongs to the class I-like SAM-binding methyltransferase superfamily. Cation-dependent O-methyltransferase family. Mg(2+) is required as a cofactor.

The enzyme catalyses norbelladine + S-adenosyl-L-methionine = 4'-O-methylnorbelladine + S-adenosyl-L-homocysteine + H(+). It participates in alkaloid biosynthesis. 4'-O-methyltransferase converting norbelladine to 4'-O-methylnorbelladine. 4'-O-methylnorbelladine is a precursor to all Amaryllidaceae alkaloids such as galanthamine, lycorine and haemanthamine, and including haemanthamine- and crinamine-type alkaloids, promising anticancer agents. This chain is Norbelladine 4'-O-methyltransferase 5, found in Narcissus aff. pseudonarcissus MK-2014 (Daffodil).